A 290-amino-acid chain; its full sequence is Pyridoxal kinase PdxY (290 aa).

Substrate contacts are provided by residues S12 and 47-48 (TQ). ATP contacts are provided by residues D114, E151, K184, and 211 to 214 (RPLL). D225 contributes to the substrate binding site.

The protein belongs to the pyridoxine kinase family. PdxY subfamily. In terms of assembly, homodimer. It depends on Mg(2+) as a cofactor.

The enzyme catalyses pyridoxal + ATP = pyridoxal 5'-phosphate + ADP + H(+). The protein operates within cofactor metabolism; pyridoxal 5'-phosphate salvage; pyridoxal 5'-phosphate from pyridoxal: step 1/1. In terms of biological role, pyridoxal kinase involved in the salvage pathway of pyridoxal 5'-phosphate (PLP). Catalyzes the phosphorylation of pyridoxal to PLP. This is Pyridoxal kinase PdxY from Pseudomonas entomophila (strain L48).